The following is a 228-amino-acid chain: Thymidylate kinase (228 aa).

20 to 27 serves as a coordination point for ATP; that stretch reads GGEGSGKS.

It belongs to the thymidylate kinase family.

The enzyme catalyses dTMP + ATP = dTDP + ADP. Its function is as follows. Phosphorylation of dTMP to form dTDP in both de novo and salvage pathways of dTTP synthesis. The polypeptide is Thymidylate kinase (Afipia carboxidovorans (strain ATCC 49405 / DSM 1227 / KCTC 32145 / OM5) (Oligotropha carboxidovorans)).